The sequence spans 886 residues: Leucine--tRNA ligase (886 aa).

The 'HIGH' region motif lies at 46 to 56; sequence PYPSGKLHMGH. The 'KMSKS' region signature appears at 638 to 642; the sequence is TMSKS. Lysine 641 lines the ATP pocket.

It belongs to the class-I aminoacyl-tRNA synthetase family.

It is found in the cytoplasm. It carries out the reaction tRNA(Leu) + L-leucine + ATP = L-leucyl-tRNA(Leu) + AMP + diphosphate. The sequence is that of Leucine--tRNA ligase from Polaromonas sp. (strain JS666 / ATCC BAA-500).